Reading from the N-terminus, the 514-residue chain is F-box-like/WD repeat-containing protein TBL1XR1 (514 aa).

Ser2 bears the N-acetylserine mark. The 33-residue stretch at 4-36 folds into the LisH domain; the sequence is SSDEVNFLVYRYLQESGFSHSAFTFGIESHISQ. The F-box-like domain maps to 41–86; it reads GALVPPAALISIIQKGLQYVEAEVSINEDGTLFDGRPIESLSLIDA. Residue Lys102 is modified to N6-acetyllysine. Position 119 is a phosphoserine (Ser119). Residues 120-135 show a composition bias toward low complexity; that stretch reads QQGSAKNGENTANGEE. Residues 120–139 are disordered; it reads QQGSAKNGENTANGEENGAH. WD repeat units follow at residues 167–206, 223–262, 264–303, 306–344, 347–386, 389–437, 440–479, and 481–513; these read GHES…TSGS, PSNK…ASTL, QHKG…AKQQ, FHSA…PIKT, GHTN…CVHD, AHNK…CIHT, KHQE…LVHS, and RGTG…LDLR. Residue Lys277 forms a Glycyl lysine isopeptide (Lys-Gly) (interchain with G-Cter in SUMO2) linkage.

It belongs to the WD repeat EBI family. As to quaternary structure, component of the N-Cor repressor complex, at least composed of NCOR1, NCOR2, HDAC3, TBL1X, TBL1XR1, CORO2A and GPS2. Probable component of some E3 ubiquitin ligase complex. Interacts with histones H2B and H4. Interacts with MECP2; bridges interaction between MECP2 and NCOR1. Interacts with USP44. Widely expressed including the pituitary, hypothalamus, white and brown adipose tissue, muscle and liver.

The protein localises to the nucleus. F-box-like protein involved in the recruitment of the ubiquitin/19S proteasome complex to nuclear receptor-regulated transcription units. Plays an essential role in transcription activation mediated by nuclear receptors. Probably acts as integral component of the N-Cor corepressor complex that mediates the recruitment of the 19S proteasome complex, leading to the subsequent proteasomal degradation of N-Cor complex, thereby allowing cofactor exchange, and transcription activation. The protein is F-box-like/WD repeat-containing protein TBL1XR1 (TBL1XR1) of Homo sapiens (Human).